Reading from the N-terminus, the 183-residue chain is Adenine phosphoribosyltransferase (183 aa).

This sequence belongs to the purine/pyrimidine phosphoribosyltransferase family. As to quaternary structure, homodimer.

The protein localises to the cytoplasm. The enzyme catalyses AMP + diphosphate = 5-phospho-alpha-D-ribose 1-diphosphate + adenine. It functions in the pathway purine metabolism; AMP biosynthesis via salvage pathway; AMP from adenine: step 1/1. Catalyzes a salvage reaction resulting in the formation of AMP, that is energically less costly than de novo synthesis. This chain is Adenine phosphoribosyltransferase, found in Shewanella sp. (strain ANA-3).